A 333-amino-acid polypeptide reads, in one-letter code: Phosphate acyltransferase (333 aa).

Belongs to the PlsX family. As to quaternary structure, homodimer. Probably interacts with PlsY.

The protein localises to the cytoplasm. It carries out the reaction a fatty acyl-[ACP] + phosphate = an acyl phosphate + holo-[ACP]. It functions in the pathway lipid metabolism; phospholipid metabolism. Catalyzes the reversible formation of acyl-phosphate (acyl-PO(4)) from acyl-[acyl-carrier-protein] (acyl-ACP). This enzyme utilizes acyl-ACP as fatty acyl donor, but not acyl-CoA. This chain is Phosphate acyltransferase, found in Ligilactobacillus salivarius (strain UCC118) (Lactobacillus salivarius).